Consider the following 322-residue polypeptide: 4-hydroxythreonine-4-phosphate dehydrogenase (322 aa).

Residues histidine 126 and threonine 127 each contribute to the substrate site. Residues histidine 160, histidine 205, and histidine 260 each coordinate a divalent metal cation. The substrate site is built by lysine 268, asparagine 277, and arginine 286.

The protein belongs to the PdxA family. In terms of assembly, homodimer. The cofactor is Zn(2+). Requires Mg(2+) as cofactor. Co(2+) serves as cofactor.

It localises to the cytoplasm. It catalyses the reaction 4-(phosphooxy)-L-threonine + NAD(+) = 3-amino-2-oxopropyl phosphate + CO2 + NADH. Its pathway is cofactor biosynthesis; pyridoxine 5'-phosphate biosynthesis; pyridoxine 5'-phosphate from D-erythrose 4-phosphate: step 4/5. Functionally, catalyzes the NAD(P)-dependent oxidation of 4-(phosphooxy)-L-threonine (HTP) into 2-amino-3-oxo-4-(phosphooxy)butyric acid which spontaneously decarboxylates to form 3-amino-2-oxopropyl phosphate (AHAP). The chain is 4-hydroxythreonine-4-phosphate dehydrogenase from Paracoccus denitrificans (strain Pd 1222).